Consider the following 292-residue polypeptide: Non-homologous end joining protein Ku (292 aa).

The Ku domain maps to Ile9–Leu187. Low complexity predominate over residues Ala264–Ala285. A disordered region spans residues Ala264–Ala292.

Belongs to the prokaryotic Ku family. Homodimer. Interacts with LigD.

With LigD forms a non-homologous end joining (NHEJ) DNA repair enzyme, which repairs dsDNA breaks with reduced fidelity. Binds linear dsDNA with 5'- and 3'- overhangs but not closed circular dsDNA nor ssDNA. Recruits and stimulates the ligase activity of LigD. The chain is Non-homologous end joining protein Ku from Leifsonia xyli subsp. xyli (strain CTCB07).